Consider the following 331-residue polypeptide: Ketol-acid reductoisomerase (NADP(+)) (331 aa).

The KARI N-terminal Rossmann domain occupies 3–183; the sequence is AQMYYDDDAD…GGTRAGALKT (181 aa). NADP(+) contacts are provided by residues 26–29, Ser-52, and Ser-54; that span reads YGSQ. The active site involves His-109. Gly-135 contributes to the NADP(+) binding site. Residues 184 to 329 enclose the KARI C-terminal knotted domain; the sequence is TFKEETETDL…TELRSLMSWL (146 aa). Residues Asp-192, Glu-196, Glu-228, and Glu-232 each coordinate Mg(2+). Residue Ser-253 coordinates substrate.

It belongs to the ketol-acid reductoisomerase family. Requires Mg(2+) as cofactor.

It catalyses the reaction (2R)-2,3-dihydroxy-3-methylbutanoate + NADP(+) = (2S)-2-acetolactate + NADPH + H(+). The catalysed reaction is (2R,3R)-2,3-dihydroxy-3-methylpentanoate + NADP(+) = (S)-2-ethyl-2-hydroxy-3-oxobutanoate + NADPH + H(+). The protein operates within amino-acid biosynthesis; L-isoleucine biosynthesis; L-isoleucine from 2-oxobutanoate: step 2/4. It participates in amino-acid biosynthesis; L-valine biosynthesis; L-valine from pyruvate: step 2/4. Its function is as follows. Involved in the biosynthesis of branched-chain amino acids (BCAA). Catalyzes an alkyl-migration followed by a ketol-acid reduction of (S)-2-acetolactate (S2AL) to yield (R)-2,3-dihydroxy-isovalerate. In the isomerase reaction, S2AL is rearranged via a Mg-dependent methyl migration to produce 3-hydroxy-3-methyl-2-ketobutyrate (HMKB). In the reductase reaction, this 2-ketoacid undergoes a metal-dependent reduction by NADPH to yield (R)-2,3-dihydroxy-isovalerate. This Thermobifida fusca (strain YX) protein is Ketol-acid reductoisomerase (NADP(+)).